The primary structure comprises 257 residues: Imidazole glycerol phosphate synthase subunit HisF (257 aa).

Residues Asp12 and Asp131 contribute to the active site.

It belongs to the HisA/HisF family. As to quaternary structure, heterodimer of HisH and HisF.

It is found in the cytoplasm. It carries out the reaction 5-[(5-phospho-1-deoxy-D-ribulos-1-ylimino)methylamino]-1-(5-phospho-beta-D-ribosyl)imidazole-4-carboxamide + L-glutamine = D-erythro-1-(imidazol-4-yl)glycerol 3-phosphate + 5-amino-1-(5-phospho-beta-D-ribosyl)imidazole-4-carboxamide + L-glutamate + H(+). It participates in amino-acid biosynthesis; L-histidine biosynthesis; L-histidine from 5-phospho-alpha-D-ribose 1-diphosphate: step 5/9. IGPS catalyzes the conversion of PRFAR and glutamine to IGP, AICAR and glutamate. The HisF subunit catalyzes the cyclization activity that produces IGP and AICAR from PRFAR using the ammonia provided by the HisH subunit. The chain is Imidazole glycerol phosphate synthase subunit HisF from Rhodococcus jostii (strain RHA1).